The chain runs to 490 residues: AP-5 complex subunit mu-1 (490 aa).

One can recognise an MHD domain in the interval 206–476 (KPQVSISITE…LISSDYYIWN (271 aa)).

Belongs to the adaptor complexes medium subunit family. In terms of assembly, probably part of the adaptor protein complex 5 (AP-5) a tetramer composed of AP5B1, AP5M1, AP5S1 and AP5Z1.

The protein resides in the cytoplasm. The protein localises to the cytosol. It is found in the late endosome membrane. Its subcellular location is the lysosome membrane. Its function is as follows. As part of AP-5, a probable fifth adaptor protein complex it may be involved in endosomal transport. This Bos taurus (Bovine) protein is AP-5 complex subunit mu-1 (AP5M1).